The primary structure comprises 179 residues: MKSLLSTLVIIMFLAHLVTGGWYVKKCANTLGNCRKMCRDGEKQTEPATSKCPIGKLCCVLDFKISGHCGGGGQNSDNLVTAGGDEGSSAKASTAAMVGAAAMAGTPTKTSAPAKTSAPAKTSTTTKASNAAKASTTTKASNAAKASAATMAGNTTKVSTAAIASTPAQASTPTKANST.

An N-terminal signal peptide occupies residues 1–20 (MKSLLSTLVIIMFLAHLVTG). 3 disulfides stabilise this stretch: Cys-27–Cys-58, Cys-34–Cys-52, and Cys-38–Cys-59. Positions 105 to 150 (GTPTKTSAPAKTSAPAKTSTTTKASNAAKASTTTKASNAAKASAAT) are enriched in low complexity. Residues 105-152 (GTPTKTSAPAKTSAPAKTSTTTKASNAAKASTTTKASNAAKASAATMA) form a disordered region.

The protein belongs to the beta-defensin family. O-glycosylated; glycans contain alpha(2,3)-linked sialic acids. Specifically expressed in corpus epididymis and cauda epididymis with expression in corpus being highest (at protein level). Not detected in other tissues tested, including testis, prostate, seminal vesicle and vas deferens (at protein level).

Its subcellular location is the cytoplasmic vesicle. It localises to the secretory vesicle. The protein resides in the acrosome. It is found in the secreted. The protein localises to the extracellular space. In terms of biological role, probable component of sperm glycocalyx. Likely protects and facilitates transport of sperm in the female reproductive tract. Probably released from the sperm surface during capacitation. The chain is Beta-defensin 22 from Mus musculus (Mouse).